Reading from the N-terminus, the 259-residue chain is Putative zinc metalloprotease Rip2 (259 aa).

2 helical membrane-spanning segments follow: residues Pro-14–Gly-34 and Pro-39–Leu-59. His-60 lines the Zn(2+) pocket. Glu-61 is an active-site residue. His-64 contributes to the Zn(2+) binding site. A run of 4 helical transmembrane segments spans residues Gly-97–Val-117, Thr-128–Ala-148, Ile-156–Val-176, and Leu-211–Val-231.

It belongs to the peptidase M50B family. It depends on Zn(2+) as a cofactor.

It is found in the cell membrane. In Mycobacterium tuberculosis (strain ATCC 25618 / H37Rv), this protein is Putative zinc metalloprotease Rip2 (rip2).